We begin with the raw amino-acid sequence, 155 residues long: Small ribosomal subunit protein uS7c (155 aa).

Belongs to the universal ribosomal protein uS7 family. Part of the 30S ribosomal subunit.

It is found in the plastid. The protein resides in the chloroplast. One of the primary rRNA binding proteins, it binds directly to 16S rRNA where it nucleates assembly of the head domain of the 30S subunit. This chain is Small ribosomal subunit protein uS7c (rps7), found in Ginkgo biloba (Ginkgo).